The chain runs to 207 residues: MANVKLFDQTGKEVSTVELNDAIFGIEPNESVVFDVVISQRASLRQGTHAVKNRSAVSGGGRKPWRQKGTGRARQGSIRSPQWRGGGVVFGPTPRSYGYKLPQKVRRLALKSVYSAKVAEDKFVAVESLSFAAPKTAEFAKVLSALSIDTKVLVLVEEGNEFAALSARNLPNVAVATAATASVLDIVNADKLLVTKEAISTIEEVLA.

A disordered region spans residues 49–78 (HAVKNRSAVSGGGRKPWRQKGTGRARQGSI).

Belongs to the universal ribosomal protein uL4 family. As to quaternary structure, part of the 50S ribosomal subunit.

Its function is as follows. One of the primary rRNA binding proteins, this protein initially binds near the 5'-end of the 23S rRNA. It is important during the early stages of 50S assembly. It makes multiple contacts with different domains of the 23S rRNA in the assembled 50S subunit and ribosome. Forms part of the polypeptide exit tunnel. This is Large ribosomal subunit protein uL4 from Streptococcus equi subsp. zooepidemicus (strain H70).